Consider the following 438-residue polypeptide: 2-(3-amino-3-carboxypropyl)histidine synthase subunit 1 (438 aa).

The disordered stretch occupies residues 1–24; the sequence is MAALVVSETAEPGSRVGPGRGRIS. [4Fe-4S] cluster contacts are provided by Cys110, Cys214, and Cys342. Positions 402-438 are disordered; it reads LCQPASDKVQQGSRGGSPAPACESCNCADQKATSPAP. Ser418 bears the Phosphoserine mark.

The protein belongs to the DPH1/DPH2 family. DPH1 subfamily. Component of the 2-(3-amino-3-carboxypropyl)histidine synthase complex composed of DPH1, DPH2, DPH3 and a NADH-dependent reductase. Interacts with DPH2. Interacts with RBM8A. It depends on [4Fe-4S] cluster as a cofactor. As to expression, strongly expressed in kidney and liver. Moderately expressed in brain, skin and testis. Weakly expressed in heart, lung, small intestine, spleen, stomach and thymus.

Its subcellular location is the nucleus. It localises to the cytoplasm. It catalyses the reaction L-histidyl-[translation elongation factor 2] + S-adenosyl-L-methionine = 2-[(3S)-amino-3-carboxypropyl]-L-histidyl-[translation elongation factor 2] + S-methyl-5'-thioadenosine + H(+). It participates in protein modification; peptidyl-diphthamide biosynthesis. Functionally, catalyzes the first step of diphthamide biosynthesis, a post-translational modification of histidine which occurs in elongation factor 2. DPH1 and DPH2 transfer a 3-amino-3-carboxypropyl (ACP) group from S-adenosyl-L-methionine (SAM) to a histidine residue, the reaction is assisted by a reduction system comprising DPH3 and a NADH-dependent reductase. Acts as a tumor suppressor. In Mus musculus (Mouse), this protein is 2-(3-amino-3-carboxypropyl)histidine synthase subunit 1.